The sequence spans 390 residues: Succinate--CoA ligase [ADP-forming] subunit beta (390 aa).

In terms of domain architecture, ATP-grasp spans 9-245 (KELLSRYGLP…KSQENEREVK (237 aa)). Residues K46, 53 to 55 (GRG), E100, Y103, and E108 each bind ATP. Residues N200 and D214 each contribute to the Mg(2+) site. Substrate contacts are provided by residues N265 and 322–324 (GIV).

This sequence belongs to the succinate/malate CoA ligase beta subunit family. As to quaternary structure, heterotetramer of two alpha and two beta subunits. It depends on Mg(2+) as a cofactor.

It catalyses the reaction succinate + ATP + CoA = succinyl-CoA + ADP + phosphate. The catalysed reaction is GTP + succinate + CoA = succinyl-CoA + GDP + phosphate. It functions in the pathway carbohydrate metabolism; tricarboxylic acid cycle; succinate from succinyl-CoA (ligase route): step 1/1. In terms of biological role, succinyl-CoA synthetase functions in the citric acid cycle (TCA), coupling the hydrolysis of succinyl-CoA to the synthesis of either ATP or GTP and thus represents the only step of substrate-level phosphorylation in the TCA. The beta subunit provides nucleotide specificity of the enzyme and binds the substrate succinate, while the binding sites for coenzyme A and phosphate are found in the alpha subunit. The chain is Succinate--CoA ligase [ADP-forming] subunit beta from Chromobacterium violaceum (strain ATCC 12472 / DSM 30191 / JCM 1249 / CCUG 213 / NBRC 12614 / NCIMB 9131 / NCTC 9757 / MK).